Reading from the N-terminus, the 144-residue chain is Putative pre-16S rRNA nuclease (144 aa).

It belongs to the YqgF nuclease family.

It localises to the cytoplasm. In terms of biological role, could be a nuclease involved in processing of the 5'-end of pre-16S rRNA. The protein is Putative pre-16S rRNA nuclease of Wigglesworthia glossinidia brevipalpis.